A 110-amino-acid chain; its full sequence is Nucleoid-associated protein RALTA_A1934 (110 aa).

The segment covering 88–98 (TTQEKMGSMTS) has biased composition (polar residues). The tract at residues 88–110 (TTQEKMGSMTSGLPLPPGFKLPF) is disordered. A compositionally biased stretch (pro residues) spans 101–110 (PLPPGFKLPF).

This sequence belongs to the YbaB/EbfC family. Homodimer.

The protein resides in the cytoplasm. It localises to the nucleoid. Binds to DNA and alters its conformation. May be involved in regulation of gene expression, nucleoid organization and DNA protection. The protein is Nucleoid-associated protein RALTA_A1934 of Cupriavidus taiwanensis (strain DSM 17343 / BCRC 17206 / CCUG 44338 / CIP 107171 / LMG 19424 / R1) (Ralstonia taiwanensis (strain LMG 19424)).